The sequence spans 723 residues: Threonine--tRNA ligase 1, cytoplasmic (723 aa).

The span at 1-10 shows a compositional bias: polar residues; it reads MSEEQASSPS. The interval 1–49 is disordered; the sequence is MSEEQASSPSAKMGDEEKPVGAGEEKQKEGSKKKNKEGSGDGGRAELNP. The span at 13 to 39 shows a compositional bias: basic and acidic residues; it reads MGDEEKPVGAGEEKQKEGSKKKNKEGS. Phosphoserine is present on Ser-39. The region spanning 79 to 143 is the TGS domain; that stretch reads DSKPIKVTLP…EEDCTLELLK (65 aa). At Lys-243 the chain carries N6-acetyllysine. Phosphothreonine is present on Thr-246. Residue Tyr-298 is modified to Phosphotyrosine. Thr-453 is modified (phosphothreonine). Phosphoserine is present on Ser-702.

This sequence belongs to the class-II aminoacyl-tRNA synthetase family. In terms of assembly, homodimer. Post-translationally, ISGylated.

Its subcellular location is the cytoplasm. It carries out the reaction tRNA(Thr) + L-threonine + ATP = L-threonyl-tRNA(Thr) + AMP + diphosphate + H(+). Its function is as follows. Catalyzes the attachment of threonine to tRNA(Thr) in a two-step reaction: threonine is first activated by ATP to form Thr-AMP and then transferred to the acceptor end of tRNA(Thr). Also edits incorrectly charged tRNA(Thr) via its editing domain, at the post-transfer stage. This chain is Threonine--tRNA ligase 1, cytoplasmic (TARS1), found in Bos taurus (Bovine).